Here is a 936-residue protein sequence, read N- to C-terminus: General transcription factor II-I repeat domain-containing protein 2 (936 aa).

The GTF2I-like 1 repeat unit spans residues 95–189 (EACPGEAQLL…FLGAESQLGG (95 aa)). The segment at 199-222 (PTVPPNDSYGPVSVKTEPMEDSGT) is disordered. Residues 319-413 (LSGLEKIKQL…LPGLELSNVG (95 aa)) form a GTF2I-like 2 repeat.

The protein belongs to the TFII-I family. As to expression, ubiquitous.

The protein localises to the nucleus. The chain is General transcription factor II-I repeat domain-containing protein 2 (Gtf2ird2) from Mus musculus (Mouse).